Here is a 494-residue protein sequence, read N- to C-terminus: Alpha-amylase-related protein (494 aa).

A signal peptide spans 1-20; the sequence is MFKFALALTLCLAGASLSLA. Position 21 is a pyrrolidone carboxylic acid (Gln-21). Residues Cys-48 and Cys-104 are joined by a disulfide bond. Asn-118, Gln-169, and Asp-178 together coordinate Ca(2+). An intrachain disulfide couples Cys-157 to Cys-171. Arg-206 provides a ligand contact to chloride. Asp-208 acts as the Nucleophile in catalysis. Ca(2+) is bound at residue His-212. Glu-245 functions as the Proton donor in the catalytic mechanism. 2 residues coordinate chloride: Asn-308 and Arg-343. 3 disulfides stabilise this stretch: Cys-376/Cys-382, Cys-418/Cys-441, and Cys-448/Cys-460.

This sequence belongs to the glycosyl hydrolase 13 family. As to quaternary structure, monomer. Requires Ca(2+) as cofactor. Chloride serves as cofactor.

It is found in the secreted. It catalyses the reaction Endohydrolysis of (1-&gt;4)-alpha-D-glucosidic linkages in polysaccharides containing three or more (1-&gt;4)-alpha-linked D-glucose units.. The polypeptide is Alpha-amylase-related protein (Amyrel) (Drosophila dossoui (Fruit fly)).